Consider the following 199-residue polypeptide: 3-isopropylmalate dehydratase small subunit (199 aa).

Belongs to the LeuD family. LeuD type 1 subfamily. As to quaternary structure, heterodimer of LeuC and LeuD.

It carries out the reaction (2R,3S)-3-isopropylmalate = (2S)-2-isopropylmalate. Its pathway is amino-acid biosynthesis; L-leucine biosynthesis; L-leucine from 3-methyl-2-oxobutanoate: step 2/4. Catalyzes the isomerization between 2-isopropylmalate and 3-isopropylmalate, via the formation of 2-isopropylmaleate. This is 3-isopropylmalate dehydratase small subunit from Pseudoalteromonas translucida (strain TAC 125).